We begin with the raw amino-acid sequence, 39 residues long: Omega-theraphotoxin-Bs1b (39 aa).

Intrachain disulfides connect Cys-4–Cys-25, Cys-8–Cys-31, and Cys-17–Cys-36.

It belongs to the neurotoxin 12 (Hwtx-2) family. 06 (TXP1) subfamily. As to expression, expressed by the venom gland.

It is found in the secreted. In terms of biological role, inhibits voltage-gated calcium channels (Cav) in rat cerebellar granule cells. Has insecticidal activity. This Brachypelma smithi (Mexican red knee tarantula) protein is Omega-theraphotoxin-Bs1b.